The chain runs to 818 residues: LPS-assembly protein LptD (818 aa).

Residues 1-33 (MVNETMKHQFKFNPLATAIFTLLCSGSIQSSYA) form the signal peptide.

This sequence belongs to the LptD family. As to quaternary structure, component of the lipopolysaccharide transport and assembly complex. Interacts with LptE and LptA.

It localises to the cell outer membrane. Together with LptE, is involved in the assembly of lipopolysaccharide (LPS) at the surface of the outer membrane. This is LPS-assembly protein LptD from Acinetobacter baumannii (strain ATCC 19606 / DSM 30007 / JCM 6841 / CCUG 19606 / CIP 70.34 / NBRC 109757 / NCIMB 12457 / NCTC 12156 / 81).